Here is a 206-residue protein sequence, read N- to C-terminus: Small ribosomal subunit protein uS4 (206 aa).

The S4 RNA-binding domain occupies 96-156 (NRLDNVTYRI…KNSKLQSRIK (61 aa)).

The protein belongs to the universal ribosomal protein uS4 family. Part of the 30S ribosomal subunit. Contacts protein S5. The interaction surface between S4 and S5 is involved in control of translational fidelity.

Functionally, one of the primary rRNA binding proteins, it binds directly to 16S rRNA where it nucleates assembly of the body of the 30S subunit. With S5 and S12 plays an important role in translational accuracy. In Buchnera aphidicola subsp. Baizongia pistaciae (strain Bp), this protein is Small ribosomal subunit protein uS4.